Here is a 254-residue protein sequence, read N- to C-terminus: Hydroxyacylglutathione hydrolase (254 aa).

Residues His-54, His-56, Asp-58, His-59, His-111, Asp-130, and His-168 each contribute to the Zn(2+) site.

It belongs to the metallo-beta-lactamase superfamily. Glyoxalase II family. Monomer. Zn(2+) is required as a cofactor.

It catalyses the reaction an S-(2-hydroxyacyl)glutathione + H2O = a 2-hydroxy carboxylate + glutathione + H(+). The protein operates within secondary metabolite metabolism; methylglyoxal degradation; (R)-lactate from methylglyoxal: step 2/2. In terms of biological role, thiolesterase that catalyzes the hydrolysis of S-D-lactoyl-glutathione to form glutathione and D-lactic acid. This chain is Hydroxyacylglutathione hydrolase, found in Legionella pneumophila (strain Lens).